We begin with the raw amino-acid sequence, 272 residues long: Elongation factor Ts (272 aa).

The tract at residues 76–79 is involved in Mg(2+) ion dislocation from EF-Tu; that stretch reads TDFV.

The protein belongs to the EF-Ts family.

The protein resides in the cytoplasm. In terms of biological role, associates with the EF-Tu.GDP complex and induces the exchange of GDP to GTP. It remains bound to the aminoacyl-tRNA.EF-Tu.GTP complex up to the GTP hydrolysis stage on the ribosome. The protein is Elongation factor Ts of Corynebacterium jeikeium (strain K411).